Here is a 239-residue protein sequence, read N- to C-terminus: 4-hydroxy-tetrahydrodipicolinate reductase (239 aa).

Residues glycine 8 to methionine 13, glycine 78 to threonine 80, and serine 102 to methionine 105 contribute to the NAD(+) site. The active-site Proton donor/acceptor is the histidine 134. Histidine 135 lines the (S)-2,3,4,5-tetrahydrodipicolinate pocket. Lysine 138 acts as the Proton donor in catalysis. Residue glycine 144 to threonine 145 participates in (S)-2,3,4,5-tetrahydrodipicolinate binding.

This sequence belongs to the DapB family.

It localises to the cytoplasm. The enzyme catalyses (S)-2,3,4,5-tetrahydrodipicolinate + NAD(+) + H2O = (2S,4S)-4-hydroxy-2,3,4,5-tetrahydrodipicolinate + NADH + H(+). It catalyses the reaction (S)-2,3,4,5-tetrahydrodipicolinate + NADP(+) + H2O = (2S,4S)-4-hydroxy-2,3,4,5-tetrahydrodipicolinate + NADPH + H(+). It participates in amino-acid biosynthesis; L-lysine biosynthesis via DAP pathway; (S)-tetrahydrodipicolinate from L-aspartate: step 4/4. Functionally, catalyzes the conversion of 4-hydroxy-tetrahydrodipicolinate (HTPA) to tetrahydrodipicolinate. In Rickettsia conorii (strain ATCC VR-613 / Malish 7), this protein is 4-hydroxy-tetrahydrodipicolinate reductase.